Consider the following 108-residue polypeptide: CRISPR-associated endoribonuclease Cas2 (108 aa).

Position 15 (D15) interacts with Mg(2+).

This sequence belongs to the CRISPR-associated endoribonuclease Cas2 protein family. As to quaternary structure, homodimer, forms a heterotetramer with a Cas1 homodimer. Mg(2+) is required as a cofactor.

Its function is as follows. CRISPR (clustered regularly interspaced short palindromic repeat), is an adaptive immune system that provides protection against mobile genetic elements (viruses, transposable elements and conjugative plasmids). CRISPR clusters contain sequences complementary to antecedent mobile elements and target invading nucleic acids. CRISPR clusters are transcribed and processed into CRISPR RNA (crRNA). Functions as a ssRNA-specific endoribonuclease. Involved in the integration of spacer DNA into the CRISPR cassette. The protein is CRISPR-associated endoribonuclease Cas2 of Paracidovorax avenae (strain ATCC 19860 / DSM 7227 / CCUG 15838 / JCM 20985 / LMG 2117 / NCPPB 1011) (Acidovorax avenae).